A 253-amino-acid chain; its full sequence is LexA repressor (253 aa).

Residues 26 to 46 (FDEMKDALNLRSKSGIHRLIS) constitute a DNA-binding region (H-T-H motif). The tract at residues 73 to 97 (MPAATGKPPLAESGPPPVTAPATDE) is disordered. Catalysis depends on for autocatalytic cleavage activity residues serine 174 and lysine 212.

It belongs to the peptidase S24 family. Homodimer.

The enzyme catalyses Hydrolysis of Ala-|-Gly bond in repressor LexA.. Functionally, represses a number of genes involved in the response to DNA damage (SOS response), including recA and lexA. In the presence of single-stranded DNA, RecA interacts with LexA causing an autocatalytic cleavage which disrupts the DNA-binding part of LexA, leading to derepression of the SOS regulon and eventually DNA repair. The protein is LexA repressor of Gluconacetobacter diazotrophicus (strain ATCC 49037 / DSM 5601 / CCUG 37298 / CIP 103539 / LMG 7603 / PAl5).